The following is a 503-amino-acid chain: ATP synthase subunit alpha (503 aa).

Position 169-176 (169-176 (GDRKTGKT)) interacts with ATP.

This sequence belongs to the ATPase alpha/beta chains family. As to quaternary structure, F-type ATPases have 2 components, CF(1) - the catalytic core - and CF(0) - the membrane proton channel. CF(1) has five subunits: alpha(3), beta(3), gamma(1), delta(1), epsilon(1). CF(0) has three main subunits: a(1), b(2) and c(9-12). The alpha and beta chains form an alternating ring which encloses part of the gamma chain. CF(1) is attached to CF(0) by a central stalk formed by the gamma and epsilon chains, while a peripheral stalk is formed by the delta and b chains.

The protein localises to the cell membrane. The enzyme catalyses ATP + H2O + 4 H(+)(in) = ADP + phosphate + 5 H(+)(out). Its function is as follows. Produces ATP from ADP in the presence of a proton gradient across the membrane. The alpha chain is a regulatory subunit. The protein is ATP synthase subunit alpha of Lactobacillus delbrueckii subsp. bulgaricus (strain ATCC BAA-365 / Lb-18).